The primary structure comprises 189 residues: Large ribosomal subunit protein bL9 (189 aa).

It belongs to the bacterial ribosomal protein bL9 family.

Functionally, binds to the 23S rRNA. This is Large ribosomal subunit protein bL9 from Cereibacter sphaeroides (strain KD131 / KCTC 12085) (Rhodobacter sphaeroides).